The chain runs to 91 residues: Uteroglobin (91 aa).

Positions 1-21 (MKLAITLALVTLALLCSPASA) are cleaved as a signal peptide.

This sequence belongs to the secretoglobin family. As to quaternary structure, antiparallel homodimer; disulfide-linked. Interaction with LMBR1L is controversial. As to expression, synthesized in the uterus and lung.

It localises to the secreted. Functionally, uteroglobin binds progesterone specifically and with high affinity. It may regulate progesterone concentrations reaching the blastocyst. It is also a potent inhibitor of phospholipase A2. This is Uteroglobin (SCGB1A1) from Oryctolagus cuniculus (Rabbit).